A 129-amino-acid polypeptide reads, in one-letter code: M-zodatoxin-Lt8k (129 aa).

Residues 1-20 (MKYFVVALALVAAFACIAES) form the signal peptide. Positions 21–60 (KPAESEHELAEVEEENELADLEDAVWLEHLADLSDLEEAR) are excised as a propeptide.

It belongs to the cationic peptide 06 (cytoinsectotoxin) family. In terms of tissue distribution, expressed by the venom gland.

It localises to the secreted. Its function is as follows. Insecticidal, cytolytic and antimicrobial peptide. Forms voltage-dependent, ion-permeable channels in membranes. At high concentration causes cell membrane lysis. In Lachesana tarabaevi (Spider), this protein is M-zodatoxin-Lt8k (cit 1-10).